The primary structure comprises 449 residues: Bifunctional protein GlmU (449 aa).

Residues 1 to 225 (MLSVAILAAG…NGELQGINNR (225 aa)) form a pyrophosphorylase region. UDP-N-acetyl-alpha-D-glucosamine is bound by residues 7 to 10 (LAAG), K21, Q73, and 78 to 79 (GT). Position 103 (D103) interacts with Mg(2+). Positions 140, 154, 169, and 223 each coordinate UDP-N-acetyl-alpha-D-glucosamine. Mg(2+) is bound at residue N223. Positions 226–246 (IQLSKCEEIIQNSIKEKHMLN) are linker. The tract at residues 247–449 (GVTFINQASC…NIDNWERKKP (203 aa)) is N-acetyltransferase. 2 residues coordinate UDP-N-acetyl-alpha-D-glucosamine: R328 and K346. Catalysis depends on H358, which acts as the Proton acceptor. Residues Y361 and N372 each contribute to the UDP-N-acetyl-alpha-D-glucosamine site. A375, A418, and R435 together coordinate acetyl-CoA.

In the N-terminal section; belongs to the N-acetylglucosamine-1-phosphate uridyltransferase family. The protein in the C-terminal section; belongs to the transferase hexapeptide repeat family. Homotrimer. Mg(2+) is required as a cofactor.

It localises to the cytoplasm. It carries out the reaction alpha-D-glucosamine 1-phosphate + acetyl-CoA = N-acetyl-alpha-D-glucosamine 1-phosphate + CoA + H(+). The catalysed reaction is N-acetyl-alpha-D-glucosamine 1-phosphate + UTP + H(+) = UDP-N-acetyl-alpha-D-glucosamine + diphosphate. The protein operates within nucleotide-sugar biosynthesis; UDP-N-acetyl-alpha-D-glucosamine biosynthesis; N-acetyl-alpha-D-glucosamine 1-phosphate from alpha-D-glucosamine 6-phosphate (route II): step 2/2. It functions in the pathway nucleotide-sugar biosynthesis; UDP-N-acetyl-alpha-D-glucosamine biosynthesis; UDP-N-acetyl-alpha-D-glucosamine from N-acetyl-alpha-D-glucosamine 1-phosphate: step 1/1. It participates in bacterial outer membrane biogenesis; LPS lipid A biosynthesis. Functionally, catalyzes the last two sequential reactions in the de novo biosynthetic pathway for UDP-N-acetylglucosamine (UDP-GlcNAc). The C-terminal domain catalyzes the transfer of acetyl group from acetyl coenzyme A to glucosamine-1-phosphate (GlcN-1-P) to produce N-acetylglucosamine-1-phosphate (GlcNAc-1-P), which is converted into UDP-GlcNAc by the transfer of uridine 5-monophosphate (from uridine 5-triphosphate), a reaction catalyzed by the N-terminal domain. This chain is Bifunctional protein GlmU, found in Prochlorococcus marinus (strain MIT 9312).